The chain runs to 133 residues: Ribonuclease P protein component (133 aa).

The protein belongs to the RnpA family. In terms of assembly, consists of a catalytic RNA component (M1 or rnpB) and a protein subunit.

The enzyme catalyses Endonucleolytic cleavage of RNA, removing 5'-extranucleotides from tRNA precursor.. In terms of biological role, RNaseP catalyzes the removal of the 5'-leader sequence from pre-tRNA to produce the mature 5'-terminus. It can also cleave other RNA substrates such as 4.5S RNA. The protein component plays an auxiliary but essential role in vivo by binding to the 5'-leader sequence and broadening the substrate specificity of the ribozyme. This chain is Ribonuclease P protein component, found in Pseudomonas putida (strain ATCC 47054 / DSM 6125 / CFBP 8728 / NCIMB 11950 / KT2440).